The following is a 563-amino-acid chain: Arginine--tRNA ligase (563 aa).

A 'HIGH' region motif is present at residues 121–131 (PNIAKPFSIGH).

Belongs to the class-I aminoacyl-tRNA synthetase family. In terms of assembly, monomer.

It localises to the cytoplasm. The enzyme catalyses tRNA(Arg) + L-arginine + ATP = L-arginyl-tRNA(Arg) + AMP + diphosphate. In Streptococcus mutans serotype c (strain ATCC 700610 / UA159), this protein is Arginine--tRNA ligase.